Consider the following 1045-residue polypeptide: Endoglucanase B (1045 aa).

An N-terminal signal peptide occupies residues 1-33 (MLRQVPRTLVAGGSALAVAVGVLVAPLATGAAA). Positions 34 to 492 (APTYNYAEAL…LASFPTPEQP (459 aa)) are catalytic. The active-site Nucleophile is D91. Residues H410, D449, and E458 contribute to the active site. A CBM3 domain is found at 493 to 642 (DGDQLFVEAM…STLVWGKEPT (150 aa)). Linker ('hinge') (Pro-Thr box) regions lie at residues 644 to 650 (TTTDTTP), 734 to 748 (AAVT…ETEP), 831 to 846 (APVT…DTVA), and 931 to 944 (SPVT…TSTP). Fibronectin type-III domains are found at residues 653–743 (TPGT…TDTT), 751–840 (TPGT…TAAP), and 849–940 (VPGT…TLPV). Positions 939–1045 (PVTSTPSCTV…SFTVNGEVCG (107 aa)) constitute a CBM2 domain. A disulfide bridge links C946 with C1044.

The protein belongs to the glycosyl hydrolase 9 (cellulase E) family.

It carries out the reaction Endohydrolysis of (1-&gt;4)-beta-D-glucosidic linkages in cellulose, lichenin and cereal beta-D-glucans.. Its function is as follows. The biological conversion of cellulose to glucose generally requires three types of hydrolytic enzymes: (1) Endoglucanases which cut internal beta-1,4-glucosidic bonds; (2) Exocellobiohydrolases that cut the disaccharide cellobiose from the non-reducing end of the cellulose polymer chain; (3) Beta-1,4-glucosidases which hydrolyze the cellobiose and other short cello-oligosaccharides to glucose. This Cellulomonas fimi protein is Endoglucanase B (cenB).